The primary structure comprises 150 residues: Ribonuclease H (150 aa).

Positions 7 to 148 (ERPRVEIWTD…VDQLATRGRE (142 aa)) constitute an RNase H type-1 domain. Residues Asp16, Glu54, Asp76, and Asp140 each coordinate Mg(2+).

Belongs to the RNase H family. Monomer. Requires Mg(2+) as cofactor.

Its subcellular location is the cytoplasm. The catalysed reaction is Endonucleolytic cleavage to 5'-phosphomonoester.. Functionally, endonuclease that specifically degrades the RNA of RNA-DNA hybrids. The polypeptide is Ribonuclease H (Gluconobacter oxydans (strain 621H) (Gluconobacter suboxydans)).